The chain runs to 968 residues: Serine/threonine-protein kinase 10 (968 aa).

2 positions are modified to phosphoserine: S13 and S20. Residues W36–V294 enclose the Protein kinase domain. ATP is bound by residues L42 to V50 and K65. D157 (proton acceptor) is an active-site residue. Residues D175–G224 form an activation segment region. A Phosphoserine modification is found at S191. 2 stretches are compositionally biased toward polar residues: residues L337–S351 and S361–P393. Disordered regions lie at residues L337–R411 and A425–L490. 6 positions are modified to phosphoserine: S438, S450, S454, S485, S514, and S549. A compositionally biased stretch (polar residues) spans A441 to L457. The stretch at Q573 to C947 forms a coiled coil. Disordered stretches follow at residues V668–K690, I827–Q865, L910–N929, and E944–S968. Residues E835–Q865 show a composition bias toward basic and acidic residues. T952 is subject to Phosphothreonine.

The protein belongs to the protein kinase superfamily. STE Ser/Thr protein kinase family. STE20 subfamily. Homodimer; homodimerization is required for activation segment autophosphorylation. Post-translationally, autophosphorylates following homodimerization, leading to activation of the protein. In terms of tissue distribution, highly expressed in rapidly proliferating tissues (spleen, placenta, and peripheral blood leukocytes). Also expressed in brain, heart, skeletal muscle, colon, thymus, kidney, liver, small intestine and lung.

It localises to the cell membrane. It carries out the reaction L-seryl-[protein] + ATP = O-phospho-L-seryl-[protein] + ADP + H(+). It catalyses the reaction L-threonyl-[protein] + ATP = O-phospho-L-threonyl-[protein] + ADP + H(+). Inhibited by the pyrrole-indolinone inhibitor SU11274 (K00593): intercalates between the ATP-binding Lys-65 and alpha-C glutamate (Glu-81), resulting in a partial disordering of the lysine side chain. Also specifically inhibited by erlotinib. Slightly inhibited by gefitinib. In terms of biological role, serine/threonine-protein kinase involved in regulation of lymphocyte migration. Phosphorylates MSN, and possibly PLK1. Involved in regulation of lymphocyte migration by mediating phosphorylation of ERM proteins such as MSN. Acts as a negative regulator of MAP3K1/MEKK1. May also act as a cell cycle regulator by acting as a polo kinase kinase: mediates phosphorylation of PLK1 in vitro; however such data require additional evidences in vivo. The polypeptide is Serine/threonine-protein kinase 10 (STK10) (Homo sapiens (Human)).